Reading from the N-terminus, the 115-residue chain is uncharacterized protein (115 aa).

3 helical membrane passes run 1–21 (MFLA…FGSW), 33–53 (ALAL…LAAG), and 54–74 (GVVA…VCIA).

To M.leprae ML0030.

The protein localises to the cell membrane. This is an uncharacterized protein from Mycobacterium tuberculosis (strain CDC 1551 / Oshkosh).